A 610-amino-acid polypeptide reads, in one-letter code: UvrABC system protein C (610 aa).

One can recognise a GIY-YIG domain in the interval 16–94; sequence SQPGVYRMYD…IKLYQPRYNV (79 aa). Residues 204-239 enclose the UVR domain; that stretch reads DQVLTQLIARMEKASQDLAFEEAARIRDQIQAVRRV.

It belongs to the UvrC family. As to quaternary structure, interacts with UvrB in an incision complex.

It is found in the cytoplasm. Its function is as follows. The UvrABC repair system catalyzes the recognition and processing of DNA lesions. UvrC both incises the 5' and 3' sides of the lesion. The N-terminal half is responsible for the 3' incision and the C-terminal half is responsible for the 5' incision. This is UvrABC system protein C from Salmonella paratyphi B (strain ATCC BAA-1250 / SPB7).